The primary structure comprises 684 residues: Zinc finger BED domain-containing protein RICESLEEPER 4 (684 aa).

The BED-type zinc finger occupies 54-113; sequence KRKSAIWEHFTLVDVSDGCKRASCIHCNQSLAYSSGSKNSGTSHLTRHIAEWCRVLKDRQ. Zn(2+)-binding residues include Cys77, Cys80, His101, and Cys106. Positions 595–680 are HATC (Hobo-Ac-Tam3) domain; it reads ELELYLEEAL…EALLCAKDWL (86 aa).

In terms of assembly, homodimer.

It is found in the nucleus. In terms of biological role, transposase-like protein that is essential for plant growth and development. May regulate global gene expression by recruiting other cellular factors. This Oryza sativa subsp. japonica (Rice) protein is Zinc finger BED domain-containing protein RICESLEEPER 4.